We begin with the raw amino-acid sequence, 147 residues long: Large ribosomal subunit protein uL13 (147 aa).

This sequence belongs to the universal ribosomal protein uL13 family. In terms of assembly, part of the 50S ribosomal subunit.

This protein is one of the early assembly proteins of the 50S ribosomal subunit, although it is not seen to bind rRNA by itself. It is important during the early stages of 50S assembly. This is Large ribosomal subunit protein uL13 from Lactobacillus delbrueckii subsp. bulgaricus (strain ATCC 11842 / DSM 20081 / BCRC 10696 / JCM 1002 / NBRC 13953 / NCIMB 11778 / NCTC 12712 / WDCM 00102 / Lb 14).